The sequence spans 194 residues: MLQPKQTNWVILAGGQARRMGGQDKGFVTFQDKPLIEHALDTLRSQTDHIAINANRSIDNYSRYTVTFKDEFTDYPGPLAGMHAGLVNMASDWVGFIPCDSPNLPNNLISLLCNAVKDDTDIVVAHDGEYMQPVVTLMHKRIIPKIDAFLARGDRKIILLYKECNTVFADFSDYPNAFINLNSPQELEQFGTLL.

GTP is bound by residues 12–14, Lys25, Asn53, Asp70, and Asp100; that span reads LAG. A Mg(2+)-binding site is contributed by Asp100.

The protein belongs to the MobA family. As to quaternary structure, monomer. Requires Mg(2+) as cofactor.

The protein localises to the cytoplasm. The enzyme catalyses Mo-molybdopterin + GTP + H(+) = Mo-molybdopterin guanine dinucleotide + diphosphate. Functionally, transfers a GMP moiety from GTP to Mo-molybdopterin (Mo-MPT) cofactor (Moco or molybdenum cofactor) to form Mo-molybdopterin guanine dinucleotide (Mo-MGD) cofactor. This is Molybdenum cofactor guanylyltransferase from Aliivibrio salmonicida (strain LFI1238) (Vibrio salmonicida (strain LFI1238)).